A 175-amino-acid polypeptide reads, in one-letter code: Inorganic pyrophosphatase 1 (175 aa).

Residues Lys-30, Arg-44, and Tyr-56 each coordinate substrate. The Mg(2+) site is built by Asp-66, Asp-71, and Asp-103. Tyr-142 provides a ligand contact to substrate.

The protein belongs to the PPase family. As to quaternary structure, homohexamer. Requires Mg(2+) as cofactor.

It localises to the cytoplasm. The catalysed reaction is diphosphate + H2O = 2 phosphate + H(+). Functionally, catalyzes the hydrolysis of inorganic pyrophosphate (PPi) forming two phosphate ions. In Pseudomonas syringae pv. tomato (strain ATCC BAA-871 / DC3000), this protein is Inorganic pyrophosphatase 1.